Reading from the N-terminus, the 321-residue chain is Citrate synthase (321 aa).

Catalysis depends on residues histidine 248 and aspartate 306.

Belongs to the citrate synthase family.

It carries out the reaction oxaloacetate + acetyl-CoA + H2O = citrate + CoA + H(+). It participates in carbohydrate metabolism; tricarboxylic acid cycle; isocitrate from oxaloacetate: step 1/2. This chain is Citrate synthase (gltA), found in Bartonella bacilliformis.